The chain runs to 732 residues: Coagulation factor XIII A chain (732 aa).

A disordered region spans residues 1-27; it reads MSETSRTAFGGRRAVPPNNSNAAEDDL. N-acetylserine is present on serine 2. Residues 2 to 38 constitute a propeptide, activation peptide; the sequence is SETSRTAFGGRRAVPPNNSNAAEDDLPTVELQGVVPR. Active-site residues include cysteine 315, histidine 374, and aspartate 397. Positions 437, 439, 486, and 491 each coordinate Ca(2+). A glycan (N-linked (GlcNAc...) asparagine) is linked at asparagine 614.

This sequence belongs to the transglutaminase superfamily. Transglutaminase family. In terms of assembly, tetramer of two A chains (F13A1) and two B (F13B) chains. Ca(2+) is required as a cofactor. The activation peptide is released by thrombin.

It is found in the cytoplasm. It localises to the secreted. It catalyses the reaction L-glutaminyl-[protein] + L-lysyl-[protein] = [protein]-L-lysyl-N(6)-5-L-glutamyl-[protein] + NH4(+). Its function is as follows. Factor XIII is activated by thrombin and calcium ion to a transglutaminase that catalyzes the formation of gamma-glutamyl-epsilon-lysine cross-links between fibrin chains, thus stabilizing the fibrin clot. Also cross-link alpha-2-plasmin inhibitor, or fibronectin, to the alpha chains of fibrin. The chain is Coagulation factor XIII A chain (F13A1) from Homo sapiens (Human).